The following is a 319-amino-acid chain: Malate dehydrogenase (319 aa).

Residues 10-15 (GAGQIG) and aspartate 34 contribute to the NAD(+) site. The substrate site is built by arginine 85 and arginine 91. Residues asparagine 98 and 121–123 (ITN) contribute to the NAD(+) site. Residues asparagine 123 and arginine 154 each contribute to the substrate site. Histidine 178 acts as the Proton acceptor in catalysis.

This sequence belongs to the LDH/MDH superfamily. MDH type 3 family.

It catalyses the reaction (S)-malate + NAD(+) = oxaloacetate + NADH + H(+). In terms of biological role, catalyzes the reversible oxidation of malate to oxaloacetate. The sequence is that of Malate dehydrogenase from Rhodospirillum centenum (strain ATCC 51521 / SW).